The following is a 106-amino-acid chain: SH3 domain-binding glutamic acid-rich-like protein 2-B (106 aa).

The short motif at 61-67 (QGNPLPP) is the SH3-binding element.

Belongs to the SH3BGR family.

The protein localises to the nucleus. This is SH3 domain-binding glutamic acid-rich-like protein 2-B (sh3bgrl2-b) from Xenopus laevis (African clawed frog).